Reading from the N-terminus, the 125-residue chain is Small ribosomal subunit protein eS6 (125 aa).

This sequence belongs to the eukaryotic ribosomal protein eS6 family.

In Thermococcus onnurineus (strain NA1), this protein is Small ribosomal subunit protein eS6.